A 118-amino-acid chain; its full sequence is Holo-[acyl-carrier-protein] synthase (118 aa).

Mg(2+)-binding residues include D8 and E58.

It belongs to the P-Pant transferase superfamily. AcpS family. Mg(2+) serves as cofactor.

It is found in the cytoplasm. It catalyses the reaction apo-[ACP] + CoA = holo-[ACP] + adenosine 3',5'-bisphosphate + H(+). Functionally, transfers the 4'-phosphopantetheine moiety from coenzyme A to a Ser of acyl-carrier-protein. The protein is Holo-[acyl-carrier-protein] synthase of Streptococcus uberis (strain ATCC BAA-854 / 0140J).